A 154-amino-acid polypeptide reads, in one-letter code: Transcriptional repressor NrdR (154 aa).

The segment at 3 to 34 (CPFCTHPDTRVADSRLMEERNAVRRRRHCPNC) is a zinc-finger region. The ATP-cone domain occupies 49–139 (PAVIGPDKKR…LHKRFDNPAD (91 aa)).

The protein belongs to the NrdR family. It depends on Zn(2+) as a cofactor.

In terms of biological role, negatively regulates transcription of bacterial ribonucleotide reductase nrd genes and operons by binding to NrdR-boxes. This is Transcriptional repressor NrdR from Neisseria meningitidis serogroup A / serotype 4A (strain DSM 15465 / Z2491).